The following is a 164-amino-acid chain: MKVKFKGKEVTLEGTEIKVGDTFPDFVAVNSSLEPVMLKNTNRVRVFLAVPSVDTPVCDLEVKTFNARASEIDGVSIYTISMDLPFAQSRWCGAEGIKNVTTLSDYRDRAFGKNTGTYIKELGLLARAVFVVDSSNKVTYANYLEEVSGYPNYDEVLQAAQAAK.

A Thioredoxin domain is found at 17 to 162; it reads IKVGDTFPDF…YDEVLQAAQA (146 aa). Catalysis depends on cysteine 58, which acts as the Cysteine sulfenic acid (-SOH) intermediate. Cysteine 58 and cysteine 92 are disulfide-bonded.

The protein belongs to the peroxiredoxin family. Tpx subfamily. As to quaternary structure, homodimer.

The enzyme catalyses a hydroperoxide + [thioredoxin]-dithiol = an alcohol + [thioredoxin]-disulfide + H2O. Its function is as follows. Thiol-specific peroxidase that catalyzes the reduction of hydrogen peroxide and organic hydroperoxides to water and alcohols, respectively. Plays a role in cell protection against oxidative stress by detoxifying peroxides. The chain is Thiol peroxidase from Clostridium acetobutylicum (strain ATCC 824 / DSM 792 / JCM 1419 / IAM 19013 / LMG 5710 / NBRC 13948 / NRRL B-527 / VKM B-1787 / 2291 / W).